Reading from the N-terminus, the 75-residue chain is Dermaseptin-DA2 (75 aa).

The signal sequence occupies residues 1–22 (MALVKKSLFLVLFLGLVSLSIC). Residues 23-42 (EEKRENEDEEEQEDDEQSEE) constitute a propeptide that is removed on maturation.

The protein belongs to the frog skin active peptide (FSAP) family. Dermaseptin subfamily. As to expression, expressed by the skin glands.

It is found in the secreted. Functionally, possesses a potent antimicrobial activity against Gram-positive and Gram-negative bacteria. Probably acts by disturbing membrane functions with its amphipathic structure. In Agalychnis dacnicolor (Giant Mexican leaf frog), this protein is Dermaseptin-DA2.